The sequence spans 118 residues: Ig heavy chain V region AC38 205.12 (118 aa).

The tract at residues 1–98 (EVQLQQSGPE…EDSAVYYCAR (98 aa)) is v segment. The cysteines at positions 22 and 96 are disulfide-linked. The d segment stretch occupies residues 99 to 104 (GYGYDP). Positions 105–118 (FDVWGTGTTVTVSS) are j segment.

The polypeptide is Ig heavy chain V region AC38 205.12 (Mus musculus (Mouse)).